Reading from the N-terminus, the 424-residue chain is MKLVLFLVLLFSALINLTNADKMVVAHFIVGNTYPYTVSNWEEDIQDAIAVGIDGFALNMGSDAWQVERIEDAYDAAASVSSDFKLFISFDMSIISADADFIEGVVRRFADKPNQLYYDGKVFVSTFAGETDTFGYSDVSTGWDSAVKEPLASAGYPIYFVPSWTSLGQGALEESVADGFLSWNAWPTTDADMNDNDDIGYQNLANSLGKLYVAPVSPWFYTHLSYKNWAYKSDWLIIDRWNEMLSVQPDMIEVLTWNDYGESHYIGNIQGALPAGSEGYVDGFDHTAWRYLMSPYISAYKLGLSEPYINFESLFYWYRPTPKSATATADSLSYPSGGDYMEDEIFVLVYLLQSAEVTVTCGSTTQTFSGVPGVNQFTIPMETNASPSFTVARQGGTLASGTGPEIVDSLSIYNFNAYTGVLYF.

Residues Met1–Ala20 form the signal peptide.

This sequence belongs to the glycosyl hydrolase 71 family. In terms of assembly, monomer. Post-translationally, not glycosylated.

It localises to the secreted. The protein resides in the cell wall. The enzyme catalyses Endohydrolysis of (1-&gt;3)-alpha-D-glucosidic linkages in isolichenin, pseudonigeran and nigeran.. In terms of biological role, has a role in cell separation where it is required for the degradation of the cell wall material surrounding the septum (the septum edging) which must be hydrolyzed before full separation of the daughter cells can occur. Hydrolyzes 1,3-alpha-glucan predominantly into pentasaccharides. This Schizosaccharomyces pombe (strain 972 / ATCC 24843) (Fission yeast) protein is Glucan endo-1,3-alpha-glucosidase agn1 (agn1).